We begin with the raw amino-acid sequence, 338 residues long: Isopenicillin N synthase (338 aa).

Positions 89, 93, 185, and 191 each coordinate isopenicillin N. The N-[(5S)-5-amino-5-carboxypentanoyl]-L-cysteinyl-D-valine site is built by Arg-89, Tyr-93, Ser-185, Tyr-191, His-216, and Asp-218. Positions 182 to 290 (TLSSVVLIRY…RQSLPFFVNL (109 aa)) constitute a Fe2OG dioxygenase domain. Fe(2+) contacts are provided by His-216, Asp-218, and His-272. 2-oxoglutarate is bound at residue Arg-281. Ser-283 serves as a coordination point for isopenicillin N. N-[(5S)-5-amino-5-carboxypentanoyl]-L-cysteinyl-D-valine is bound at residue Ser-283.

The protein belongs to the iron/ascorbate-dependent oxidoreductase family. In terms of assembly, monomer. Fe(2+) is required as a cofactor.

It localises to the cytoplasm. The protein resides in the cytosol. It carries out the reaction N-[(5S)-5-amino-5-carboxypentanoyl]-L-cysteinyl-D-valine + O2 = isopenicillin N + 2 H2O. The protein operates within antibiotic biosynthesis; penicillin G biosynthesis; penicillin G from L-alpha-aminoadipate and L-cysteine and L-valine: step 2/3. Isopenicillin N synthase; part of the gene cluster that mediates the biosynthesis of penicillin, the world's most important antibiotic. IpnA catalyzes the cyclization of the tripeptide N-[(5S)-5-amino-5-carboxypentanoyl]-L-cysteinyl-D-valine (LLD-ACV or ACV) to form isopenicillin N (IPN) that contains the beta-lactam nucleus. The penicillin biosynthesis occurs via 3 enzymatic steps, the first corresponding to the production of the tripeptide N-[(5S)-5-amino-5-carboxypentanoyl]-L-cysteinyl-D-valine (LLD-ACV or ACV) by the NRPS pcbAB. The tripeptide ACV is then cyclized to isopenicillin N (IPN) by the isopenicillin N synthase pcbC that forms the beta-lactam nucleus. Finally, the alpha-aminoadipyl side chain is exchanged for phenylacetic acid by the isopenicillin N acyltransferase penDE to yield penicillin in the peroxisomal matrix. The sequence is that of Isopenicillin N synthase (PCBC) from Hapsidospora chrysogena (Acremonium chrysogenum).